The primary structure comprises 1212 residues: Probable serine/threonine-protein kinase DDB_G0284491 (1212 aa).

Residues 197–217 traverse the membrane as a helical segment; sequence LFHSFSLLNLYVYLIIVIRII. 14 N-linked (GlcNAc...) asparagine glycosylation sites follow: asparagine 229, asparagine 299, asparagine 309, asparagine 328, asparagine 335, asparagine 341, asparagine 344, asparagine 391, asparagine 419, asparagine 422, asparagine 426, asparagine 427, asparagine 435, and asparagine 499. A disordered region spans residues 288–329; it reads LNNNNDNNLNNNNSNNNLNNNNNSNSNFNNDNNLNSNINSND. 2 disordered regions span residues 412–439 and 489–517; these read GNSNSGSNNSNSSNNNSSSNSLINNSGG and IIKNNNNNNNNNSNNNNNNNDEDDSDYEE. The segment covering 489–507 has biased composition (low complexity); the sequence is IIKNNNNNNNNNSNNNNNN. Over residues 508–517 the composition is skewed to acidic residues; that stretch reads NDEDDSDYEE. The chain crosses the membrane as a helical span at residues 673–693; sequence IQIFDDYSLIIALRLLMNFIL. Positions 703–720 are enriched in pro residues; sequence VPPPPTQPSSRPQSPPTV. 2 disordered regions span residues 703-733 and 751-813; these read VPPPPTQPSSRPQSPPTVSPLTPLNNHHHSG and EVVS…NNNN. Positions 865-1182 constitute a Protein kinase domain; the sequence is ETEIEPFASG…EVYNDLQDIY (318 aa). ATP is bound by residues 871-879 and lysine 924; that span reads FASGGQANI. Aspartate 1035 acts as the Proton acceptor in catalysis.

This sequence belongs to the protein kinase superfamily. Ser/Thr protein kinase family.

It localises to the membrane. It catalyses the reaction L-seryl-[protein] + ATP = O-phospho-L-seryl-[protein] + ADP + H(+). It carries out the reaction L-threonyl-[protein] + ATP = O-phospho-L-threonyl-[protein] + ADP + H(+). The protein is Probable serine/threonine-protein kinase DDB_G0284491 of Dictyostelium discoideum (Social amoeba).